A 218-amino-acid polypeptide reads, in one-letter code: Large ribosomal subunit protein uL3 (218 aa).

The segment at 127-167 is disordered; that stretch reads GFSRGPMSHGSKNHREPGSTGAGTTPGRIYPGKRMAGRYGG.

The protein belongs to the universal ribosomal protein uL3 family. As to quaternary structure, part of the 50S ribosomal subunit. Forms a cluster with proteins L14 and L19.

One of the primary rRNA binding proteins, it binds directly near the 3'-end of the 23S rRNA, where it nucleates assembly of the 50S subunit. This is Large ribosomal subunit protein uL3 from Prochlorococcus marinus (strain MIT 9303).